The following is a 155-amino-acid chain: Ribonuclease H (155 aa).

An RNase H type-1 domain is found at 4–145; it reads NISKVVIYTD…ADKLAAQGRQ (142 aa). Residues D13, E51, D73, and D137 each contribute to the Mg(2+) site.

It belongs to the RNase H family. Monomer. Requires Mg(2+) as cofactor.

It localises to the cytoplasm. The catalysed reaction is Endonucleolytic cleavage to 5'-phosphomonoester.. In terms of biological role, endonuclease that specifically degrades the RNA of RNA-DNA hybrids. In Rickettsia canadensis (strain McKiel), this protein is Ribonuclease H.